The sequence spans 927 residues: Isoleucine--tRNA ligase (927 aa).

Residues 57 to 67 (PFANGNIHMGH) carry the 'HIGH' region motif. L-isoleucyl-5'-AMP is bound at residue Glu-553. The 'KMSKS' region signature appears at 594 to 598 (KMSKS). Lys-597 contacts ATP. Zn(2+) contacts are provided by Cys-886, Cys-889, Cys-906, and Cys-909.

This sequence belongs to the class-I aminoacyl-tRNA synthetase family. IleS type 1 subfamily. Monomer. It depends on Zn(2+) as a cofactor.

The protein localises to the cytoplasm. It catalyses the reaction tRNA(Ile) + L-isoleucine + ATP = L-isoleucyl-tRNA(Ile) + AMP + diphosphate. Functionally, catalyzes the attachment of isoleucine to tRNA(Ile). As IleRS can inadvertently accommodate and process structurally similar amino acids such as valine, to avoid such errors it has two additional distinct tRNA(Ile)-dependent editing activities. One activity is designated as 'pretransfer' editing and involves the hydrolysis of activated Val-AMP. The other activity is designated 'posttransfer' editing and involves deacylation of mischarged Val-tRNA(Ile). The polypeptide is Isoleucine--tRNA ligase (Lactobacillus helveticus (strain DPC 4571)).